The primary structure comprises 210 residues: Flagellar transcriptional regulator FlhC (210 aa).

Zn(2+)-binding residues include Cys-144, Cys-147, Cys-164, and Cys-167.

It belongs to the FlhC family. In terms of assembly, heterohexamer composed of two FlhC and four FlhD subunits. Each FlhC binds a FlhD dimer, forming a heterotrimer, and a hexamer assembles by dimerization of two heterotrimers. Requires Zn(2+) as cofactor.

The protein resides in the cytoplasm. In terms of biological role, functions in complex with FlhD as a master transcriptional regulator that regulates transcription of several flagellar and non-flagellar operons by binding to their promoter region. Activates expression of class 2 flagellar genes, including fliA, which is a flagellum-specific sigma factor that turns on the class 3 genes. Also regulates genes whose products function in a variety of physiological pathways. This Cupriavidus pinatubonensis (strain JMP 134 / LMG 1197) (Cupriavidus necator (strain JMP 134)) protein is Flagellar transcriptional regulator FlhC.